Reading from the N-terminus, the 590-residue chain is Aspartate--tRNA(Asp/Asn) ligase (590 aa).

E170 is a binding site for L-aspartate. Residues 194 to 197 (QLFK) are aspartate. Position 216 (R216) interacts with L-aspartate. ATP contacts are provided by residues 216–218 (RDE) and Q225. H448 serves as a coordination point for L-aspartate. Position 482 (E482) interacts with ATP. R489 is a binding site for L-aspartate. Residue 534–537 (GWDR) participates in ATP binding. Residues 559–590 (GGVDPLTEAPAPITAQQRKESGIDAKPGKDGA) are disordered. Residues 575 to 590 (QRKESGIDAKPGKDGA) show a composition bias toward basic and acidic residues.

This sequence belongs to the class-II aminoacyl-tRNA synthetase family. Type 1 subfamily. In terms of assembly, homodimer.

Its subcellular location is the cytoplasm. The enzyme catalyses tRNA(Asx) + L-aspartate + ATP = L-aspartyl-tRNA(Asx) + AMP + diphosphate. Aspartyl-tRNA synthetase with relaxed tRNA specificity since it is able to aspartylate not only its cognate tRNA(Asp) but also tRNA(Asn). Reaction proceeds in two steps: L-aspartate is first activated by ATP to form Asp-AMP and then transferred to the acceptor end of tRNA(Asp/Asn). This chain is Aspartate--tRNA(Asp/Asn) ligase, found in Mycolicibacterium gilvum (strain PYR-GCK) (Mycobacterium gilvum (strain PYR-GCK)).